We begin with the raw amino-acid sequence, 328 residues long: Tetraacyldisaccharide 4'-kinase (328 aa).

55-62 is an ATP binding site; the sequence is TAGGNGKT.

This sequence belongs to the LpxK family.

It catalyses the reaction a lipid A disaccharide + ATP = a lipid IVA + ADP + H(+). Its pathway is glycolipid biosynthesis; lipid IV(A) biosynthesis; lipid IV(A) from (3R)-3-hydroxytetradecanoyl-[acyl-carrier-protein] and UDP-N-acetyl-alpha-D-glucosamine: step 6/6. Functionally, transfers the gamma-phosphate of ATP to the 4'-position of a tetraacyldisaccharide 1-phosphate intermediate (termed DS-1-P) to form tetraacyldisaccharide 1,4'-bis-phosphate (lipid IVA). In Yersinia enterocolitica serotype O:8 / biotype 1B (strain NCTC 13174 / 8081), this protein is Tetraacyldisaccharide 4'-kinase.